The chain runs to 234 residues: Proteasome subunit alpha type-2 (234 aa).

Position 2 is an N-acetylalanine (alanine 2). Phosphotyrosine is present on tyrosine 121.

This sequence belongs to the peptidase T1A family. The 26S proteasome consists of a 20S proteasome core and two 19S regulatory subunits. The 20S proteasome core is a barrel-shaped complex made of 28 subunits that are arranged in four stacked rings. The two outer rings are each formed by seven alpha subunits, and the two inner rings are formed by seven beta subunits. The proteolytic activity is exerted by three beta-subunits PSMB5, PSMB6 and PSMB7.

The protein resides in the cytoplasm. It is found in the nucleus. Component of the 20S core proteasome complex involved in the proteolytic degradation of most intracellular proteins. This complex plays numerous essential roles within the cell by associating with different regulatory particles. Associated with two 19S regulatory particles, forms the 26S proteasome and thus participates in the ATP-dependent degradation of ubiquitinated proteins. The 26S proteasome plays a key role in the maintenance of protein homeostasis by removing misfolded or damaged proteins that could impair cellular functions, and by removing proteins whose functions are no longer required. Associated with the PA200 or PA28, the 20S proteasome mediates ubiquitin-independent protein degradation. This type of proteolysis is required in several pathways including spermatogenesis (20S-PA200 complex) or generation of a subset of MHC class I-presented antigenic peptides (20S-PA28 complex). The sequence is that of Proteasome subunit alpha type-2 (psma2) from Xenopus laevis (African clawed frog).